We begin with the raw amino-acid sequence, 842 residues long: Follistatin-related protein 4 (842 aa).

The signal sequence occupies residues 1 to 22; it reads MKPGGFWLHLTLLGASLPAALG. Residues 81 to 135 enclose the Kazal-like domain; that stretch reads KTGEPECQCLEACRPSYVPVCGSDGRFYENHCKLHRAACLLGKRITVIHSKDCFL. 3 disulfides stabilise this stretch: C87–C119, C93–C112, and C101–C133. In terms of domain architecture, EF-hand spans 174–209; it reads QKRLLVESLFRDLDADGNGHLSSSELAQHVLKKQDL. Positions 187, 189, 191, 193, and 198 each coordinate Ca(2+). 2 consecutive Ig-like domains span residues 251 to 338 and 341 to 426; these read PEDR…LQVN and PVIR…EDIS. Intrachain disulfides connect C270–C321 and C362–C413. N318 carries an N-linked (GlcNAc...) asparagine glycan.

The protein resides in the secreted. This chain is Follistatin-related protein 4 (FSTL4), found in Homo sapiens (Human).